A 603-amino-acid chain; its full sequence is F-box only protein 46 (603 aa).

The tract at residues 20 to 54 is disordered; sequence YSQNQPRPPSATLKPPVCPDTSSGTEPDHRPAHLE. S21 and S67 each carry phosphoserine. Disordered stretches follow at residues 111 to 163, 235 to 301, 332 to 359, and 396 to 442; these read GGSR…PTSS, EAQR…TRAK, EASE…ARDC, and TVSP…GTTD. T347 is modified (phosphothreonine). The span at 347–356 shows a compositional bias: pro residues; the sequence is TPPAPPPPPA. Positions 470–522 constitute an F-box domain; sequence RQYMLLLPEHVLVKIFSFLPTRALAALKCTCHHFKGIIEAFGVRATDSRWSRD.

In terms of assembly, part of a SCF (SKP1-cullin-F-box) protein ligase complex SCF(FBXO46) composed of CUL1, SKP1, RBX1 and FBXO46. Post-translationally, phosphorylated by ATM in response to DNA damage, promoting ubiquitination and degradation by the SCF(FBXO31) complex. ATM-phosphorylated FBXO46 is ubiquitinated and degradaded by the SCF(FBXO31) complex in response to DNA damage.

It functions in the pathway protein modification; protein ubiquitination. Its function is as follows. Substrate-recognition component of the SCF(FBXO46) protein ligase complex, which mediates the ubiquitination and degradation of target proteins. In absence of stress, the SCF(FBXO46) complex catalyzes ubiquitination and degradation of MTOR-phosphorylated FBXO31. The polypeptide is F-box only protein 46 (Fbxo46) (Rattus norvegicus (Rat)).